The chain runs to 113 residues: MSLKIRLARAGAKKRPYYHIVIADSRSPRDGRFIEKVGAYNPMLPSDHADRVRLVNERITHWLSQGALPTDRVARFLGNAGLAPKPAYTEQPKKSAPKKRAQERAAAAAAAAA.

Residues 84–113 (PKPAYTEQPKKSAPKKRAQERAAAAAAAAA) are disordered.

Belongs to the bacterial ribosomal protein bS16 family.

The chain is Small ribosomal subunit protein bS16 from Gluconacetobacter diazotrophicus (strain ATCC 49037 / DSM 5601 / CCUG 37298 / CIP 103539 / LMG 7603 / PAl5).